The sequence spans 320 residues: Transcription factor MYB80 (320 aa).

2 consecutive HTH myb-type domains span residues 9–65 (KENV…RPDL) and 66–116 (KHGQ…KKKL). 2 consecutive DNA-binding regions (H-T-H motif) follow at residues 37–61 (WRLIPKNAGLQRCGKSCRLRWTNYL) and 89–112 (WSLIAAQLPGRTDNDVKNYWNTKL). Residues 257–283 (TAAAEEEERRKLKGEVVDQEEIGSEGG) form a disordered region. Residues 263 to 272 (EERRKLKGEV) are compositionally biased toward basic and acidic residues.

In terms of tissue distribution, expressed in the tapetum and middle layer of developing anthers. Expressed in trichomes.

The protein resides in the nucleus. In terms of biological role, transcription factor that binds to the DNA sequence 5'-CCAACC-3'. Regulates directly PME5, UND and GLOX1. Essential for tapetum development in anthers and microsporogenesis. Regulates the timing of tapetal programmed cell death (PCD) which is critical for pollen development. May act through the activation of UND, encoding an A1 aspartic protease. Required for anther development by regulating tapetum development, callose dissolution and exine formation. Acts upstream of A6 and FAR2/MS2, two genes required for pollen exine formation. Negatively regulates trichome endoreduplication and trichome branching. The sequence is that of Transcription factor MYB80 from Arabidopsis thaliana (Mouse-ear cress).